A 544-amino-acid chain; its full sequence is Chaperonin GroEL (544 aa).

ATP is bound by residues Thr-30–Pro-33, Lys-51, Asp-87–Thr-91, Gly-415, Asp-481–Leu-483, and Asp-497.

This sequence belongs to the chaperonin (HSP60) family. As to quaternary structure, forms a cylinder of 14 subunits composed of two heptameric rings stacked back-to-back. Interacts with the co-chaperonin GroES.

Its subcellular location is the cytoplasm. It carries out the reaction ATP + H2O + a folded polypeptide = ADP + phosphate + an unfolded polypeptide.. Functionally, together with its co-chaperonin GroES, plays an essential role in assisting protein folding. The GroEL-GroES system forms a nano-cage that allows encapsulation of the non-native substrate proteins and provides a physical environment optimized to promote and accelerate protein folding. This is Chaperonin GroEL from Chlamydia trachomatis serovar D (strain ATCC VR-885 / DSM 19411 / UW-3/Cx).